A 493-amino-acid polypeptide reads, in one-letter code: Xylulose kinase (493 aa).

84–85 contributes to the substrate binding site; the sequence is QH. The active-site Proton acceptor is the Asp-247.

The protein belongs to the FGGY kinase family.

The enzyme catalyses D-xylulose + ATP = D-xylulose 5-phosphate + ADP + H(+). In terms of biological role, catalyzes the phosphorylation of D-xylulose to D-xylulose 5-phosphate. In Haemophilus influenzae (strain ATCC 51907 / DSM 11121 / KW20 / Rd), this protein is Xylulose kinase.